Here is a 276-residue protein sequence, read N- to C-terminus: Diaminopimelate epimerase (276 aa).

Asn-13, Gln-46, and Asn-66 together coordinate substrate. The Proton donor role is filled by Cys-75. Substrate contacts are provided by residues 76–77, Asn-159, Asn-192, and 210–211; these read GN and ER. Cys-219 acts as the Proton acceptor in catalysis. 220–221 serves as a coordination point for substrate; that stretch reads GT.

Belongs to the diaminopimelate epimerase family. In terms of assembly, homodimer.

It localises to the cytoplasm. It carries out the reaction (2S,6S)-2,6-diaminopimelate = meso-2,6-diaminopimelate. The protein operates within amino-acid biosynthesis; L-lysine biosynthesis via DAP pathway; DL-2,6-diaminopimelate from LL-2,6-diaminopimelate: step 1/1. Its function is as follows. Catalyzes the stereoinversion of LL-2,6-diaminopimelate (L,L-DAP) to meso-diaminopimelate (meso-DAP), a precursor of L-lysine and an essential component of the bacterial peptidoglycan. This Cellvibrio japonicus (strain Ueda107) (Pseudomonas fluorescens subsp. cellulosa) protein is Diaminopimelate epimerase.